The sequence spans 285 residues: 4-hydroxybenzoate octaprenyltransferase (285 aa).

Helical transmembrane passes span 28 to 48, 86 to 106, 110 to 130, 133 to 153, 165 to 185, 210 to 230, 232 to 252, and 262 to 284; these read LWAMWMAAGGPPAWGLFWIFV, IAAWEALAVAAVLALVAFALV, NALTKWLAVVAAVVAGTYPFF, FFAIPQAYLGIAFGFGIPMAF, WLMLLANVFWAVAYDTAYAMV, IMLCYAAFLALMAWAGVLLGL, WPYWVGLAAAAGCAGYHYTLI, and AAFRHNNWLGACVFAGTAVAYAI.

Belongs to the UbiA prenyltransferase family. Requires Mg(2+) as cofactor.

Its subcellular location is the cell inner membrane. The catalysed reaction is all-trans-octaprenyl diphosphate + 4-hydroxybenzoate = 4-hydroxy-3-(all-trans-octaprenyl)benzoate + diphosphate. The protein operates within cofactor biosynthesis; ubiquinone biosynthesis. Catalyzes the prenylation of para-hydroxybenzoate (PHB) with an all-trans polyprenyl group. Mediates the second step in the final reaction sequence of ubiquinone-8 (UQ-8) biosynthesis, which is the condensation of the polyisoprenoid side chain with PHB, generating the first membrane-bound Q intermediate 3-octaprenyl-4-hydroxybenzoate. This chain is 4-hydroxybenzoate octaprenyltransferase, found in Cupriavidus necator (strain ATCC 17699 / DSM 428 / KCTC 22496 / NCIMB 10442 / H16 / Stanier 337) (Ralstonia eutropha).